Here is a 476-residue protein sequence, read N- to C-terminus: Glutamyl-tRNA(Gln) amidotransferase subunit A (476 aa).

Active-site charge relay system residues include Lys77 and Ser152. The active-site Acyl-ester intermediate is Ser176.

It belongs to the amidase family. GatA subfamily. In terms of assembly, heterotrimer of A, B and C subunits.

It carries out the reaction L-glutamyl-tRNA(Gln) + L-glutamine + ATP + H2O = L-glutaminyl-tRNA(Gln) + L-glutamate + ADP + phosphate + H(+). In terms of biological role, allows the formation of correctly charged Gln-tRNA(Gln) through the transamidation of misacylated Glu-tRNA(Gln) in organisms which lack glutaminyl-tRNA synthetase. The reaction takes place in the presence of glutamine and ATP through an activated gamma-phospho-Glu-tRNA(Gln). The sequence is that of Glutamyl-tRNA(Gln) amidotransferase subunit A from Acidobacterium capsulatum (strain ATCC 51196 / DSM 11244 / BCRC 80197 / JCM 7670 / NBRC 15755 / NCIMB 13165 / 161).